Reading from the N-terminus, the 591-residue chain is Mono(ADP-ribosyl)transferase SpvB (591 aa).

The TR mART core domain maps to 373–576 (PMMGGNSSRP…LRLSDDATAD (204 aa)). Catalysis depends on residues Arg471, Ser501, and Glu538.

The protein belongs to the SpvB family.

It localises to the secreted. The enzyme catalyses L-arginyl-[protein] + NAD(+) = N(omega)-(ADP-D-ribosyl)-L-arginyl-[protein] + nicotinamide + H(+). Mono-ADP-ribosylates eukaryotic muscle and non-muscle actin on 'Arg-177'. ADP-ribosylation prevents the polymerization of G-actin to F-actin, causing actin filament depolymerization, destruction of the cytoskeleton and cytotoxicity. Does not possess NAD(+)-glycohydrolase activity, unlike most mART enzymes. This Salmonella typhimurium (strain 14028s / SGSC 2262) protein is Mono(ADP-ribosyl)transferase SpvB (spvB).